A 434-amino-acid chain; its full sequence is Peptidase B (434 aa).

Mn(2+) contacts are provided by Lys-198 and Asp-203. Lys-210 is an active-site residue. Positions 221, 280, and 282 each coordinate Mn(2+). Arg-284 is a catalytic residue.

This sequence belongs to the peptidase M17 family. Homohexamer. The cofactor is Mn(2+).

The protein resides in the cytoplasm. The enzyme catalyses Release of an N-terminal amino acid, Xaa, from a peptide or arylamide. Xaa is preferably Glu or Asp but may be other amino acids, including Leu, Met, His, Cys and Gln.. Functionally, probably plays an important role in intracellular peptide degradation. The chain is Peptidase B from Pasteurella multocida (strain Pm70).